A 703-amino-acid chain; its full sequence is Lactococcin-G-processing and transport ATP-binding protein LagD (703 aa).

Residues 7–132 (QQDEKDCGVA…KEWTGVLLFP (126 aa)) form the Peptidase C39 domain. The active site involves cysteine 13. Positions 153–435 (PILIKQKSLF…IINLQVKMQK (283 aa)) constitute an ABC transmembrane type-1 domain. A run of 7 helical transmembrane segments spans residues 162-182 (FITI…DNII), 189-209 (TLNI…LFEY), 224-244 (MSIM…FFAT), 267-287 (ATLS…TLAI), 291-311 (QLFL…YVFI), 381-401 (MVIE…YVID), and 409-429 (LITY…IINL). One can recognise an ABC transporter domain in the interval 469–703 (IKLDKVSFSY…EGVYRRLLNA (235 aa)). Residue 502-509 (GVSGSGKS) coordinates ATP.

Belongs to the ABC transporter superfamily. LagD family. In terms of assembly, homodimer.

It is found in the cell membrane. Its function is as follows. LagD (TC 3.A.1) is involved in processing the signal peptide and probably also in export of the bacteriocin lactococcin G. The polypeptide is Lactococcin-G-processing and transport ATP-binding protein LagD (lagD) (Lactococcus lactis subsp. lactis (Streptococcus lactis)).